Here is a 457-residue protein sequence, read N- to C-terminus: Chromogranin-A (457 aa).

Positions 1–18 are cleaved as a signal peptide; that stretch reads MRSAAVLALLLCAGQVTA. The cysteines at positions 35 and 56 are disulfide-linked. An O-glycosylated at one site only in cerebrospinal fluid region spans residues 41 to 59; sequence SDTLSKPSPMPVSQECFET. The interval 88 to 440 is disordered; the sequence is KERAHQQKKH…DQELESLSAI (353 aa). Residues 116–144 show a composition bias toward basic and acidic residues; the sequence is ELKEAVEEPSSKDVMEKREDSKEAEKSGE. Ser-142 is subject to Phosphoserine. The span at 171-180 shows a compositional bias: acidic residues; sequence GEEEEEEEEA. O-linked (GalNAc...) threonine glycans are attached at residues Thr-181 and Thr-183. The segment at 181-191 is O-glycosylated at one site only in cerebrospinal fluid; it reads TNTHPPASLPS. Residues 182–191 are compositionally biased toward polar residues; that stretch reads NTHPPASLPS. The residue at position 194 (Tyr-194) is a Phosphotyrosine. 2 positions are modified to phosphoserine: Ser-203 and Ser-218. Over residues 229–249 the composition is skewed to acidic residues; that stretch reads EEEEEEEEAEAGEEAVPEEEG. Residue Thr-251 is glycosylated (O-linked (GalNAc...) threonine). 2 stretches are compositionally biased toward basic and acidic residues: residues 263–272 and 291–303; these read KEIRKGESRS and PEGK…SQQK. Residues Ser-270 and Ser-300 each carry the phosphoserine modification. Gly-319 is subject to Glycine amide. Phosphoserine occurs at positions 322, 333, and 371. Basic and acidic residues predominate over residues 330–360; it reads ERLSKEWEDSKRWSKMDQLAKELTAEKRLEG. Met-372 carries the post-translational modification Methionine sulfoxide. Ser-398, Ser-402, Ser-424, and Ser-438 each carry phosphoserine. Positions 414–431 are enriched in basic and acidic residues; the sequence is YPEEKKEEEGSANRRPED. Ser-424 carries an O-linked (Xyl...) (chondroitin sulfate) serine glycan. Arg-456 is modified (arginine amide).

It belongs to the chromogranin/secretogranin protein family. As to quaternary structure, self-interacts; self-assembly is promoted in vitro by chondroitin sulfate attachment which occurs at mildly acidic pH conditions. Interacts with SCG3. Interacts with ITPR1 in the secretory granules. Post-translationally, sulfated on tyrosine residues and/or contains sulfated glycans. In terms of processing, O-glycosylated with core 1 or possibly core 8 glycans. Contains chondroitin sulfate (CS); CS attachment is pH-dependent, being observed at mildly acidic conditions of pH 5 but not at neutral pH, and promotes self-assembly in vitro. Proteolytic processing gives rise to an additional longer form of catestatin (residues 358-390) which displays a less potent catecholamine release-inhibitory activity. Plasmin-mediated proteolytic processing can give rise to additional shorter and longer forms of catestatin peptides. As to expression, detected in cerebrospinal fluid (at protein level). Detected in urine (at protein level). Found in the brain.

The protein localises to the secreted. Its subcellular location is the cytoplasmic vesicle. It localises to the secretory vesicle. It is found in the neuronal dense core vesicle. Functionally, strongly inhibits glucose induced insulin release from the pancreas. Inhibits catecholamine release from chromaffin cells and noradrenergic neurons by acting as a non-competitive nicotinic cholinergic antagonist. Displays antibacterial activity against Gram-positive bacteria S.aureus and M.luteus, and Gram-negative bacteria E.coli and P.aeruginosa. Can induce mast cell migration, degranulation and production of cytokines and chemokines. Acts as a potent scavenger of free radicals in vitro. May play a role in the regulation of cardiac function and blood pressure. Its function is as follows. Regulates granule biogenesis in endocrine cells by up-regulating the transcription of protease nexin 1 (SERPINE2) via a cAMP-PKA-SP1 pathway. This leads to inhibition of granule protein degradation in the Golgi complex which in turn promotes granule formation. The chain is Chromogranin-A (CHGA) from Homo sapiens (Human).